The following is a 514-amino-acid chain: Calcium-binding mitochondrial carrier protein SCaMC-2 (514 aa).

The Mitochondrial intermembrane segment spans residues 1–234 (MARPRSLVSP…EKQTGMWWRH (234 aa)). 4 EF-hand domains span residues 56-91 (EHER…LGVH), 92-122 (RTEL…HYLR), 123-158 (DHEK…LGVN), and 159-194 (ISEQ…HSAE). Residues Asp69, Asn71, Asp73, Asp80, Asp105, Asp107, Asp109, Gln111, and Glu116 each contribute to the Ca(2+) site. Solcar repeat units follow at residues 229 to 315 (GMWW…IKRI), 323 to 408 (LGIH…LKNA), and 420 to 508 (PGVF…LKLT). The chain crosses the membrane as a helical span at residues 235–252 (LVAGGGAGAVSRTCTAPL). Residues 253–289 (DRLKVLMQVHASRSNNMSILGGFTHMIREGGFRSLWR) lie on the Mitochondrial matrix side of the membrane. Residues 290 to 309 (GNGINVIKIAPESAIKFMAY) form a helical membrane-spanning segment. Over 310–332 (EQIKRIIGSNQETLGIHERFVAG) the chain is Mitochondrial intermembrane. Residues 333 to 346 (SLAGVIAQSSIYPM) form a helical membrane-spanning segment. Residues 347–382 (EVLKTRMALRKTGQYQGVLDCGKKILLQEGLSAFYK) lie on the Mitochondrial matrix side of the membrane. Residues 383-402 (GYVPNMLGIIPYAGIDLAVY) form a helical membrane-spanning segment. Over 403–425 (ETLKNAWLQRYATSSADPGVFVL) the chain is Mitochondrial intermembrane. Residues 426–443 (LACGTVSSTCGQLASYPL) form a helical membrane-spanning segment. The Mitochondrial matrix segment spans residues 444 to 482 (ALVRTRMQAEASVEGAPQMTMSKLFKHIVKTEGAFGLYR). A helical membrane pass occupies residues 483–502 (GLAPNFMKVIPAVSISYVVY). The Mitochondrial intermembrane portion of the chain corresponds to 503 to 514 (ENLKLTLGVQSR).

The protein belongs to the mitochondrial carrier (TC 2.A.29) family.

It is found in the mitochondrion inner membrane. Calcium-dependent mitochondrial solute carrier. This Xenopus laevis (African clawed frog) protein is Calcium-binding mitochondrial carrier protein SCaMC-2 (slc25a25).